A 215-amino-acid chain; its full sequence is UPF0502 protein YceH (215 aa).

The protein belongs to the UPF0502 family.

This is UPF0502 protein YceH from Salmonella heidelberg (strain SL476).